Here is a 52-residue protein sequence, read N- to C-terminus: Large ribosomal subunit protein bL32c (52 aa).

Belongs to the bacterial ribosomal protein bL32 family.

The protein localises to the plastid. The protein resides in the chloroplast. In Nymphaea alba (White water-lily), this protein is Large ribosomal subunit protein bL32c.